A 372-amino-acid polypeptide reads, in one-letter code: Dof zinc finger protein DOF5.6 (372 aa).

The segment at 73-127 (QKCPRCESTHTKFCYYNNYSLSQPRYFCKTCRRYWTKGGTLRNIPVGGGCRKNKK) adopts a Dof-type zinc-finger fold. Zn(2+)-binding residues include Cys75, Cys78, Cys100, and Cys103. The tract at residues 117–146 (PVGGGCRKNKKPSSSNSSSSTSSGKKPSNI) is disordered. The segment covering 128-145 (PSSSNSSSSTSSGKKPSN) has biased composition (low complexity).

The PEAR proteins (e.g. DOF2.4, DOF5.1, DOF3.2, DOF1.1, DOF5.6 and DOF5.3) form a short-range concentration gradient that peaks at protophloem sieve elements (PSE). Preferentially expressed in the vasculature of all organs, including seedlings, roots, stems, buds, leaves, flowers and siliques, and particularly in the cambium, phloem and interfascicular parenchyma cells of inflorescence stems.

The protein resides in the nucleus. In terms of biological role, transcription factor that binds specifically to a 5'-AA[AG]G-3' consensus core sequence. Promotes expression. The PEAR proteins (e.g. DOF2.4, DOF5.1, DOF3.2, DOF1.1, DOF5.6 and DOF5.3) activate gene expression that promotes radial growth of protophloem sieve elements. Involved in the regulation of interfascicular cambium formation and vascular tissue development, particularly at a very early stage during inflorescence stem development; promotes both cambium activity and phloem specification, but prevents xylem specification. The protein is Dof zinc finger protein DOF5.6 of Arabidopsis thaliana (Mouse-ear cress).